The following is a 197-amino-acid chain: Glycerol-3-phosphate acyltransferase (197 aa).

The next 5 helical transmembrane spans lie at 7 to 27, 55 to 75, 78 to 98, 116 to 136, and 157 to 177; these read TLLPLVVGYVLGSVPFGLILT, GLAAATLLLDLGKGLAAVLIV, VWPGAEALAALAAVLGHCFPV, LALAWPIGLVYAVTWLGVLFL, and VLGYAPYVPVLALLALLVLYL.

It belongs to the PlsY family. In terms of assembly, probably interacts with PlsX.

The protein resides in the cell inner membrane. It catalyses the reaction an acyl phosphate + sn-glycerol 3-phosphate = a 1-acyl-sn-glycero-3-phosphate + phosphate. It functions in the pathway lipid metabolism; phospholipid metabolism. In terms of biological role, catalyzes the transfer of an acyl group from acyl-phosphate (acyl-PO(4)) to glycerol-3-phosphate (G3P) to form lysophosphatidic acid (LPA). This enzyme utilizes acyl-phosphate as fatty acyl donor, but not acyl-CoA or acyl-ACP. This Novosphingobium aromaticivorans (strain ATCC 700278 / DSM 12444 / CCUG 56034 / CIP 105152 / NBRC 16084 / F199) protein is Glycerol-3-phosphate acyltransferase.